We begin with the raw amino-acid sequence, 224 residues long: Putative cytochrome c-type biogenesis protein DbsD-like (224 aa).

5 consecutive transmembrane segments (helical) span residues 32-52 (FIFLSGLFTSLSPCIISILPV), 74-94 (FLFCLGTISSFITLGILATLI), 104-124 (GIPTISAVVIIYMGLNLLNIV), 150-170 (GIGIAISSCSTPIFVTLLVWI), and 176-196 (IFTGLIFILIYSIGYIFPIII).

This sequence belongs to the DsbD family.

Its subcellular location is the plastid. It localises to the chloroplast membrane. Functionally, could be involved in cytochrome c synthesis. This is Putative cytochrome c-type biogenesis protein DbsD-like from Pyropia yezoensis (Susabi-nori).